We begin with the raw amino-acid sequence, 314 residues long: Glycerol-3-phosphate dehydrogenase [NAD(P)+] (314 aa).

Positions 14, 15, 35, and 108 each coordinate NADPH. 2 residues coordinate sn-glycerol 3-phosphate: Lys108 and Gly136. Ala140 is an NADPH binding site. Sn-glycerol 3-phosphate-binding residues include Lys191, Asp247, Ser257, Arg258, and Asn259. The active-site Proton acceptor is Lys191. Arg258 is a binding site for NADPH. Leu282 and Glu284 together coordinate NADPH.

This sequence belongs to the NAD-dependent glycerol-3-phosphate dehydrogenase family.

The protein resides in the cytoplasm. It carries out the reaction sn-glycerol 3-phosphate + NAD(+) = dihydroxyacetone phosphate + NADH + H(+). The enzyme catalyses sn-glycerol 3-phosphate + NADP(+) = dihydroxyacetone phosphate + NADPH + H(+). The protein operates within membrane lipid metabolism; glycerophospholipid metabolism. In terms of biological role, catalyzes the reduction of the glycolytic intermediate dihydroxyacetone phosphate (DHAP) to sn-glycerol 3-phosphate (G3P), the key precursor for phospholipid synthesis. The polypeptide is Glycerol-3-phosphate dehydrogenase [NAD(P)+] (Rickettsia bellii (strain OSU 85-389)).